The primary structure comprises 103 residues: Large ribosomal subunit protein bL21 (103 aa).

It belongs to the bacterial ribosomal protein bL21 family. Part of the 50S ribosomal subunit. Contacts protein L20.

In terms of biological role, this protein binds to 23S rRNA in the presence of protein L20. In Paraburkholderia phymatum (strain DSM 17167 / CIP 108236 / LMG 21445 / STM815) (Burkholderia phymatum), this protein is Large ribosomal subunit protein bL21.